A 198-amino-acid chain; its full sequence is ATP-dependent Clp protease proteolytic subunit 1 (198 aa).

Catalysis depends on Ser96, which acts as the Nucleophile. His121 is an active-site residue.

It belongs to the peptidase S14 family. As to quaternary structure, fourteen ClpP subunits assemble into 2 heptameric rings which stack back to back to give a disk-like structure with a central cavity, resembling the structure of eukaryotic proteasomes.

The protein resides in the cytoplasm. It catalyses the reaction Hydrolysis of proteins to small peptides in the presence of ATP and magnesium. alpha-casein is the usual test substrate. In the absence of ATP, only oligopeptides shorter than five residues are hydrolyzed (such as succinyl-Leu-Tyr-|-NHMec, and Leu-Tyr-Leu-|-Tyr-Trp, in which cleavage of the -Tyr-|-Leu- and -Tyr-|-Trp bonds also occurs).. In terms of biological role, cleaves peptides in various proteins in a process that requires ATP hydrolysis. Has a chymotrypsin-like activity. Plays a major role in the degradation of misfolded proteins. In Synechocystis sp. (strain ATCC 27184 / PCC 6803 / Kazusa), this protein is ATP-dependent Clp protease proteolytic subunit 1.